Consider the following 613-residue polypeptide: Ectonucleoside triphosphate diphosphohydrolase 4 (613 aa).

At 1 to 33 (MGRIGISCLFPASWHFSISPVGCPRILNTNLRQ) the chain is on the cytoplasmic side. A helical membrane pass occupies residues 34 to 54 (IVVISILAAAVSLLYFSVVII). At 55-559 (RSKYGWLSKD…AGHAHWRGVS (505 aa)) the chain is on the lumenal side. Residue Glu-222 is the Proton acceptor of the active site. Cys-368 and Cys-395 are oxidised to a cystine. N-linked (GlcNAc...) asparagine glycans are attached at residues Asn-404 and Asn-407. A disulfide bridge links Cys-461 with Cys-490. The helical transmembrane segment at 560 to 580 (FVYNHYLFSGCFLVVLLSILL) threads the bilayer. Over 581 to 613 (YLLRLRRIHRRAPRTGSLWMEEGLPSQKGPGPL) the chain is Cytoplasmic.

It belongs to the GDA1/CD39 NTPase family. It depends on Ca(2+) as a cofactor. Mg(2+) is required as a cofactor. In terms of tissue distribution, ubiquitous.

The protein localises to the cytoplasmic vesicle. Its subcellular location is the autophagosome membrane. The protein resides in the lysosome membrane. It is found in the golgi apparatus membrane. The catalysed reaction is a ribonucleoside 5'-triphosphate + H2O = a ribonucleoside 5'-diphosphate + phosphate + H(+). It catalyses the reaction a ribonucleoside 5'-diphosphate + H2O = a ribonucleoside 5'-phosphate + phosphate + H(+). It carries out the reaction UDP + H2O = UMP + phosphate + H(+). The enzyme catalyses UTP + H2O = UDP + phosphate + H(+). The catalysed reaction is CTP + H2O = CDP + phosphate + H(+). It catalyses the reaction GDP + H2O = GMP + phosphate + H(+). It carries out the reaction 5-methyl-UTP + H2O = 5-methyl-UDP + phosphate + H(+). Catalyzes the hydrolysis of nucleoside triphosphates and diphosphates in a calcium- or magnesium-dependent manner, with a preference for pyrimidines. Preferentially hydrolyzes UTP and TTP on UTP and TTP. AMP, ADP, ATP and UMP are not substrates. Preferentially activated by Ca(2+) over Mg(2+). Functionally, has a broad substrate specificity with the ability of cleaving all nucleotide di- and triphosphates with the exception of adenosine di- and triphosphate (ADP and ATP). Preferentially hydrolyzes CTP, UDP, CDP, GTP and GDP. Can use either Ca(2+) or Mg(2+) equally. The chain is Ectonucleoside triphosphate diphosphohydrolase 4 (Entpd4) from Mus musculus (Mouse).